We begin with the raw amino-acid sequence, 188 residues long: Elongation factor P (188 aa).

Belongs to the elongation factor P family.

It localises to the cytoplasm. It participates in protein biosynthesis; polypeptide chain elongation. In terms of biological role, involved in peptide bond synthesis. Stimulates efficient translation and peptide-bond synthesis on native or reconstituted 70S ribosomes in vitro. Probably functions indirectly by altering the affinity of the ribosome for aminoacyl-tRNA, thus increasing their reactivity as acceptors for peptidyl transferase. In Bifidobacterium longum (strain DJO10A), this protein is Elongation factor P.